The following is a 126-amino-acid chain: RutC family protein y4sK (126 aa).

Belongs to the RutC family.

This Sinorhizobium fredii (strain NBRC 101917 / NGR234) protein is RutC family protein y4sK.